The following is a 363-amino-acid chain: Ribosomal RNA large subunit methyltransferase M (363 aa).

Residues Ser190, 223 to 226 (CPGG), Asp242, Asp262, and Asp279 contribute to the S-adenosyl-L-methionine site. The active-site Proton acceptor is the Lys308.

The protein belongs to the class I-like SAM-binding methyltransferase superfamily. RNA methyltransferase RlmE family. RlmM subfamily. In terms of assembly, monomer.

It is found in the cytoplasm. It catalyses the reaction cytidine(2498) in 23S rRNA + S-adenosyl-L-methionine = 2'-O-methylcytidine(2498) in 23S rRNA + S-adenosyl-L-homocysteine + H(+). Catalyzes the 2'-O-methylation at nucleotide C2498 in 23S rRNA. The chain is Ribosomal RNA large subunit methyltransferase M from Aliivibrio salmonicida (strain LFI1238) (Vibrio salmonicida (strain LFI1238)).